Here is a 420-residue protein sequence, read N- to C-terminus: Gamma-glutamyl phosphate reductase (420 aa).

This sequence belongs to the gamma-glutamyl phosphate reductase family.

Its subcellular location is the cytoplasm. The catalysed reaction is L-glutamate 5-semialdehyde + phosphate + NADP(+) = L-glutamyl 5-phosphate + NADPH + H(+). It participates in amino-acid biosynthesis; L-proline biosynthesis; L-glutamate 5-semialdehyde from L-glutamate: step 2/2. Catalyzes the NADPH-dependent reduction of L-glutamate 5-phosphate into L-glutamate 5-semialdehyde and phosphate. The product spontaneously undergoes cyclization to form 1-pyrroline-5-carboxylate. This chain is Gamma-glutamyl phosphate reductase, found in Neisseria gonorrhoeae (strain ATCC 700825 / FA 1090).